The chain runs to 243 residues: MGRGKVQLKRIENKINRQVTFSKRRSGLLKKAHEISVLCDAEVALIIFSTKGKLYEFATDSCMDKILERYERYSYAEKVLVSTESEIQGNWCHEYRKLKAKVETIQKCQKHLMGEDLESLNLKELQQLEQQLESSLKHIRSRKNQLMHESISELQRKERSLQEENKALQKELVEKQKAHTQQAQWEQTHPQTSSSSSSMQREAPPTTNISNRPAAAGERTEEAAGQAQARVGLPPWMVSHISG.

In terms of domain architecture, MADS-box spans 1-61; the sequence is MGRGKVQLKR…GKLYEFATDS (61 aa). The 91-residue stretch at 88–178 folds into the K-box domain; that stretch reads QGNWCHEYRK…QKELVEKQKA (91 aa). Residues 122-178 are a coiled coil; it reads LKELQQLEQQLESSLKHIRSRKNQLMHESISELQRKERSLQEENKALQKELVEKQKA. The tract at residues 173–243 is disordered; the sequence is VEKQKAHTQQ…PPWMVSHISG (71 aa). Residues 179–192 show a composition bias toward polar residues; the sequence is HTQQAQWEQTHPQT.

The protein localises to the nucleus. Component of a grass-specific mechanism of vernalization, a process by which prolonged cold exposure provides competence to flower in daylengths longer than 12 hours. Involved in the exit of vernalization and confers flowering competency at the expense of freezing tolerance, probably by promoting the expression of VRN3; this process is essential in cv. Bd29-1 for flowering but seems do not occur in cv. Bd21. The polypeptide is Protein VERNALIZATION 1 (Brachypodium distachyon (Purple false brome)).